The chain runs to 493 residues: MTRDVVRKARLSGERTEDIESLLSSMEADRNIASSDVLVDMAHLVMLTRQQIVHEDHAKTLMKELLCMYESGVPAEAFDPSYEDIHAGIETILTRKTGGDVGGRLHIGRSRNDEVATCLRIRTRDIILDQLEALTRLRSVLLSVAADHITTVMPGFTHLQHAQPVTLAHHLLAYEQMFSRDFDRLFDALRRVNCSPLGSAALASTGYPLDRPFTADLLGFDRILVNSMDAVASRDFAEETLACDTMLLTNISRFCEELIIWSSAFVQFVNLDDRYCSTSSIMPQKKNPDVAEILRSRTGTILGSFVSAITIVKGLPMAYNRDLQDLNPHLWRGITGVRRDIDLLAGMVESATFNRERMAEEAGRGGTTTTELADTLVREFNIPFRTAHHIVGKAVKDGSLDLVTLDRGAEEFYGKTLSSLGVTQKNIDSALSVSTSLSVRKLPGGPAPDAVLDALAERRKELEKDIELICDKKTQISASLHELLTQARRIAQL.

It belongs to the lyase 1 family. Argininosuccinate lyase subfamily.

It is found in the cytoplasm. The enzyme catalyses 2-(N(omega)-L-arginino)succinate = fumarate + L-arginine. It functions in the pathway amino-acid biosynthesis; L-arginine biosynthesis; L-arginine from L-ornithine and carbamoyl phosphate: step 3/3. In Methanospirillum hungatei JF-1 (strain ATCC 27890 / DSM 864 / NBRC 100397 / JF-1), this protein is Argininosuccinate lyase.